The sequence spans 630 residues: MVNWQTLFMVSLRRQGSSSRYRYKFNMENITHQVFPRCKQAFKKTNLSYEYCDLEGVLYNISLTDLQKLLLRDINAPREHAFKIVRTDLTQKSSKKRIQHWERIAPMFDHPLSLYEKLFSEMDEDFKPSFEWQQLIRVRCKDDKLKLQRVIWPKSIFSNFCRGIGVKKSTYDRLLEQNNGEVPMFVNPANAKPLPLFQVSDEAMIGEFDGIGIFPYFVDKHREFFVTEVDKLKTKIASPLCTLNERKRIEKANAGRILANEEGKPFYLDANSATTRIAGGNVVTLKQLLERSVSHKTLWSKQSNKDRTCPGDILRATILSNDFSIRQLRAEFCKNFILYNIFTILQRNKKSIRSFSGNDNAPSFQFSWNVWDSYIWKQYQETESMKIPTDQASLINYKTKYDSFLHDLQTYSALVISEMKWNQFSIFQNDETTLSRFEHITLILQTVLTKSKMIRIFQPNLYKFMQDDLRPTLMELVGFTESINATIEPGFANEQSLQSANGLKKLANQLLYFEQEIYGEKFRVNRPIQLRPITLSANYKIVILDKKNAIPEIFQTLLKFMTQITTYFVKDLSEVELHGHMHCIDKKMLDKSKFMYLYEEKSNEEVKAASPQKEKIVDNIIGLLSNDEEH.

It localises to the mitochondrion. In terms of biological role, appears to be specifically required for the splicing of the terminal intron (bI5) of the cytochrome b pre-mRNA. Can also stimulates the splicing of the omega intron of the precursor of large ribosomal RNA. The protein is Cytochrome B pre-mRNA-processing protein 2 (CBP2) of Saccharomyces cerevisiae (strain ATCC 204508 / S288c) (Baker's yeast).